Consider the following 103-residue polypeptide: Large ribosomal subunit protein uL24 (103 aa).

It belongs to the universal ribosomal protein uL24 family. As to quaternary structure, part of the 50S ribosomal subunit.

Its function is as follows. One of two assembly initiator proteins, it binds directly to the 5'-end of the 23S rRNA, where it nucleates assembly of the 50S subunit. One of the proteins that surrounds the polypeptide exit tunnel on the outside of the subunit. The chain is Large ribosomal subunit protein uL24 from Listeria monocytogenes serotype 4a (strain HCC23).